A 383-amino-acid chain; its full sequence is Succinyl-diaminopimelate desuccinylase (383 aa).

Residue His-73 coordinates Zn(2+). Asp-75 is an active-site residue. Asp-107 serves as a coordination point for Zn(2+). Catalysis depends on Glu-141, which acts as the Proton acceptor. Zn(2+) contacts are provided by Glu-142, Glu-170, and His-356.

It belongs to the peptidase M20A family. DapE subfamily. Homodimer. Requires Zn(2+) as cofactor. It depends on Co(2+) as a cofactor.

The enzyme catalyses N-succinyl-(2S,6S)-2,6-diaminopimelate + H2O = (2S,6S)-2,6-diaminopimelate + succinate. Its pathway is amino-acid biosynthesis; L-lysine biosynthesis via DAP pathway; LL-2,6-diaminopimelate from (S)-tetrahydrodipicolinate (succinylase route): step 3/3. Catalyzes the hydrolysis of N-succinyl-L,L-diaminopimelic acid (SDAP), forming succinate and LL-2,6-diaminopimelate (DAP), an intermediate involved in the bacterial biosynthesis of lysine and meso-diaminopimelic acid, an essential component of bacterial cell walls. This is Succinyl-diaminopimelate desuccinylase from Pseudomonas putida (strain W619).